Consider the following 307-residue polypeptide: Ornithine carbamoyltransferase (307 aa).

Carbamoyl phosphate-binding positions include serine 50 to threonine 53, glutamine 77, arginine 101, and histidine 128 to glutamine 131. L-ornithine is bound by residues asparagine 160, aspartate 224, and serine 228–methionine 229. Carbamoyl phosphate is bound by residues cysteine 264 to leucine 265 and arginine 292.

It belongs to the aspartate/ornithine carbamoyltransferase superfamily. OTCase family.

It localises to the cytoplasm. The enzyme catalyses carbamoyl phosphate + L-ornithine = L-citrulline + phosphate + H(+). The protein operates within amino-acid biosynthesis; L-arginine biosynthesis; L-arginine from L-ornithine and carbamoyl phosphate: step 1/3. Its function is as follows. Reversibly catalyzes the transfer of the carbamoyl group from carbamoyl phosphate (CP) to the N(epsilon) atom of ornithine (ORN) to produce L-citrulline. The polypeptide is Ornithine carbamoyltransferase (Clavibacter michiganensis subsp. michiganensis (strain NCPPB 382)).